The chain runs to 410 residues: Putative nickel insertion protein (410 aa).

This sequence belongs to the LarC family.

This Cyanothece sp. (strain PCC 7425 / ATCC 29141) protein is Putative nickel insertion protein.